An 813-amino-acid polypeptide reads, in one-letter code: Leucine--tRNA ligase (813 aa).

The 'HIGH' region signature appears at 41-51 (PYPSGTLHMGH). Positions 575-579 (KMSKS) match the 'KMSKS' region motif. K578 contacts ATP.

Belongs to the class-I aminoacyl-tRNA synthetase family.

It localises to the cytoplasm. It carries out the reaction tRNA(Leu) + L-leucine + ATP = L-leucyl-tRNA(Leu) + AMP + diphosphate. In Francisella philomiragia subsp. philomiragia (strain ATCC 25017 / CCUG 19701 / FSC 153 / O#319-036), this protein is Leucine--tRNA ligase.